Here is a 192-residue protein sequence, read N- to C-terminus: 7-methyl-GTP pyrophosphatase (192 aa).

The Proton acceptor role is filled by Asp-69.

Belongs to the Maf family. YceF subfamily. The cofactor is a divalent metal cation.

Its subcellular location is the cytoplasm. It catalyses the reaction N(7)-methyl-GTP + H2O = N(7)-methyl-GMP + diphosphate + H(+). In terms of biological role, nucleoside triphosphate pyrophosphatase that hydrolyzes 7-methyl-GTP (m(7)GTP). May have a dual role in cell division arrest and in preventing the incorporation of modified nucleotides into cellular nucleic acids. The chain is 7-methyl-GTP pyrophosphatase from Pseudomonas aeruginosa (strain ATCC 15692 / DSM 22644 / CIP 104116 / JCM 14847 / LMG 12228 / 1C / PRS 101 / PAO1).